A 263-amino-acid chain; its full sequence is 5'-nucleotidase SurE (263 aa).

4 residues coordinate a divalent metal cation: D11, D12, S42, and N96.

It belongs to the SurE nucleotidase family. It depends on a divalent metal cation as a cofactor.

The protein resides in the cytoplasm. The enzyme catalyses a ribonucleoside 5'-phosphate + H2O = a ribonucleoside + phosphate. Its function is as follows. Nucleotidase that shows phosphatase activity on nucleoside 5'-monophosphates. The chain is 5'-nucleotidase SurE from Methanocorpusculum labreanum (strain ATCC 43576 / DSM 4855 / Z).